The primary structure comprises 174 residues: Nicotinamide-nucleotide adenylyltransferase (174 aa).

Belongs to the archaeal NMN adenylyltransferase family.

It localises to the cytoplasm. The catalysed reaction is beta-nicotinamide D-ribonucleotide + ATP + H(+) = diphosphate + NAD(+). It functions in the pathway cofactor biosynthesis; NAD(+) biosynthesis; NAD(+) from nicotinamide D-ribonucleotide: step 1/1. The polypeptide is Nicotinamide-nucleotide adenylyltransferase (Archaeoglobus fulgidus (strain ATCC 49558 / DSM 4304 / JCM 9628 / NBRC 100126 / VC-16)).